The sequence spans 221 residues: Zingipain-1 (221 aa).

Cystine bridges form between cysteine 24–cysteine 65, cysteine 58–cysteine 98, and cysteine 155–cysteine 206. Cysteine 27 is a catalytic residue. Asparagine 95 and asparagine 156 each carry an N-linked (GlcNAc...) asparagine glycan. Catalysis depends on residues histidine 161 and asparagine 181.

This sequence belongs to the peptidase C1 family.

The catalysed reaction is Preferential cleavage of peptides with a proline residue at the P2 position.. Functionally, cysteine proteinase with a high level of diversity in substrate specificity, an amino acid bearing a proline residue at the P2 position is preferred. This Zingiber officinale (Ginger) protein is Zingipain-1.